Here is a 309-residue protein sequence, read N- to C-terminus: Sulfate adenylyltransferase subunit 2 (309 aa).

Belongs to the PAPS reductase family. CysD subfamily. Heterodimer composed of CysD, the smaller subunit, and CysN.

The enzyme catalyses sulfate + ATP + H(+) = adenosine 5'-phosphosulfate + diphosphate. Its pathway is sulfur metabolism; hydrogen sulfide biosynthesis; sulfite from sulfate: step 1/3. Its function is as follows. With CysN forms the ATP sulfurylase (ATPS) that catalyzes the adenylation of sulfate producing adenosine 5'-phosphosulfate (APS) and diphosphate, the first enzymatic step in sulfur assimilation pathway. APS synthesis involves the formation of a high-energy phosphoric-sulfuric acid anhydride bond driven by GTP hydrolysis by CysN coupled to ATP hydrolysis by CysD. The sequence is that of Sulfate adenylyltransferase subunit 2 from Aeromonas salmonicida (strain A449).